A 122-amino-acid polypeptide reads, in one-letter code: Large ribosomal subunit protein uL14 (122 aa).

The protein belongs to the universal ribosomal protein uL14 family. In terms of assembly, part of the 50S ribosomal subunit. Forms a cluster with proteins L3 and L19. In the 70S ribosome, L14 and L19 interact and together make contacts with the 16S rRNA in bridges B5 and B8.

Functionally, binds to 23S rRNA. Forms part of two intersubunit bridges in the 70S ribosome. This chain is Large ribosomal subunit protein uL14, found in Bacillus mycoides (strain KBAB4) (Bacillus weihenstephanensis).